Here is a 314-residue protein sequence, read N- to C-terminus: tRNA dimethylallyltransferase (314 aa).

12–19 (GPTASGKT) lines the ATP pocket. 14–19 (TASGKT) serves as a coordination point for substrate. 3 interaction with substrate tRNA regions span residues 37 to 40 (DSAL), 161 to 165 (QRIQR), and 244 to 249 (RCVGYR).

Belongs to the IPP transferase family. As to quaternary structure, monomer. Requires Mg(2+) as cofactor.

The enzyme catalyses adenosine(37) in tRNA + dimethylallyl diphosphate = N(6)-dimethylallyladenosine(37) in tRNA + diphosphate. In terms of biological role, catalyzes the transfer of a dimethylallyl group onto the adenine at position 37 in tRNAs that read codons beginning with uridine, leading to the formation of N6-(dimethylallyl)adenosine (i(6)A). The polypeptide is tRNA dimethylallyltransferase (Janthinobacterium sp. (strain Marseille) (Minibacterium massiliensis)).